A 261-amino-acid chain; its full sequence is MILDKIIRYKKNKVKEEKVAVPLGEIMKQIEDMEEARNFKAALVGRESISMIAEVKKASPSKGIIKKDFNPVKIAAEYEKNRVDAISVLTEDQFFLGDNRYLQDIRKMTTIPLLRKDFMIDAYQIYQSKALGADAILLIAAALTKKEMIAFQKIAAEIGIYSLVEVHNKEELEMILETGAEIIGINNRDLKTFDTTLDRTAELLPFIPKDKIVVSESGIKTNQDMKLLKNYGINAVLMGEGLMRADSIGEKLRELRSGLCD.

It belongs to the TrpC family.

The catalysed reaction is 1-(2-carboxyphenylamino)-1-deoxy-D-ribulose 5-phosphate + H(+) = (1S,2R)-1-C-(indol-3-yl)glycerol 3-phosphate + CO2 + H2O. It participates in amino-acid biosynthesis; L-tryptophan biosynthesis; L-tryptophan from chorismate: step 4/5. The sequence is that of Indole-3-glycerol phosphate synthase from Alkaliphilus metalliredigens (strain QYMF).